Reading from the N-terminus, the 716-residue chain is Eosinophil peroxidase (716 aa).

A signal peptide spans 1–18 (MMQQLLALVGALATLILT). A propeptide spanning residues 19-140 (QHAEGTAPAS…SGCALQDQAE (122 aa)) is cleaved from the precursor. Residues asparagine 53 and asparagine 114 are each glycosylated (N-linked (GlcNAc...) asparagine). A disulfide bridge connects residues cysteine 142 and cysteine 153. Residue aspartate 233 coordinates heme b. Histidine 234 serves as the catalytic Proton acceptor. Aspartate 235 is a binding site for Ca(2+). Cystine bridges form between cysteine 254-cysteine 264 and cysteine 258-cysteine 282. Ca(2+) is bound by residues threonine 307, phenylalanine 309, aspartate 311, and serine 313. Residues asparagine 328 and asparagine 364 are each glycosylated (N-linked (GlcNAc...) asparagine). Residues cysteine 360 and cysteine 371 are joined by a disulfide bond. Heme b is bound by residues glutamate 381 and histidine 475. Tyrosine 489 carries the 3'-nitrotyrosine modification. Cystine bridges form between cysteine 579–cysteine 636 and cysteine 677–cysteine 702. An N-linked (GlcNAc...) asparagine glycan is attached at asparagine 709.

The protein belongs to the peroxidase family. XPO subfamily. In terms of assembly, tetramer of two light chains and two heavy chains. Ca(2+) serves as cofactor. The cofactor is heme b.

The protein resides in the cytoplasmic granule. It catalyses the reaction 2 a phenolic donor + H2O2 = 2 a phenolic radical donor + 2 H2O. Its function is as follows. Mediates tyrosine nitration of secondary granule proteins in mature resting eosinophils. The polypeptide is Eosinophil peroxidase (Epx) (Mus musculus (Mouse)).